Reading from the N-terminus, the 213-residue chain is Uridine kinase (213 aa).

Residue 15-22 (GASASGKS) coordinates ATP.

It belongs to the uridine kinase family.

It localises to the cytoplasm. It carries out the reaction uridine + ATP = UMP + ADP + H(+). It catalyses the reaction cytidine + ATP = CMP + ADP + H(+). Its pathway is pyrimidine metabolism; CTP biosynthesis via salvage pathway; CTP from cytidine: step 1/3. The protein operates within pyrimidine metabolism; UMP biosynthesis via salvage pathway; UMP from uridine: step 1/1. This is Uridine kinase from Proteus mirabilis (strain HI4320).